The chain runs to 268 residues: GTP cyclohydrolase III (268 aa).

It belongs to the archaeal-type GTP cyclohydrolase family. In terms of assembly, homotrimer. Requires Mg(2+) as cofactor.

The enzyme catalyses GTP + 3 H2O = 2-amino-5-formylamino-6-(5-phospho-D-ribosylamino)pyrimidin-4(3H)-one + 2 phosphate + 2 H(+). Functionally, catalyzes the formation of 2-amino-5-formylamino-6-ribofuranosylamino-4(3H)-pyrimidinone ribonucleotide monophosphate and inorganic phosphate from GTP. Also has an independent pyrophosphate phosphohydrolase activity. This Methanocaldococcus jannaschii (strain ATCC 43067 / DSM 2661 / JAL-1 / JCM 10045 / NBRC 100440) (Methanococcus jannaschii) protein is GTP cyclohydrolase III (gch3).